We begin with the raw amino-acid sequence, 196 residues long: uncharacterized protein (196 aa).

A compositionally biased stretch (basic and acidic residues) spans S122 to T135. The segment at S122–R150 is disordered.

This is an uncharacterized protein from Leptospira interrogans.